Here is a 310-residue protein sequence, read N- to C-terminus: ADP-L-glycero-D-manno-heptose-6-epimerase (310 aa).

Residues 10 to 11 (FI), 31 to 32 (DN), Lys38, Lys53, 75 to 79 (EGACS), and Asn92 each bind NADP(+). Residue Tyr140 is the Proton acceptor of the active site. Position 144 (Lys144) interacts with NADP(+). Residue Asn169 participates in substrate binding. Residues Val170 and Lys178 each contribute to the NADP(+) site. Catalysis depends on Lys178, which acts as the Proton acceptor. Substrate contacts are provided by residues Ser180, His187, 201–204 (FEGS), Arg209, and Tyr272.

It belongs to the NAD(P)-dependent epimerase/dehydratase family. HldD subfamily. Homopentamer. It depends on NADP(+) as a cofactor.

It catalyses the reaction ADP-D-glycero-beta-D-manno-heptose = ADP-L-glycero-beta-D-manno-heptose. It functions in the pathway nucleotide-sugar biosynthesis; ADP-L-glycero-beta-D-manno-heptose biosynthesis; ADP-L-glycero-beta-D-manno-heptose from D-glycero-beta-D-manno-heptose 7-phosphate: step 4/4. Catalyzes the interconversion between ADP-D-glycero-beta-D-manno-heptose and ADP-L-glycero-beta-D-manno-heptose via an epimerization at carbon 6 of the heptose. In Salmonella arizonae (strain ATCC BAA-731 / CDC346-86 / RSK2980), this protein is ADP-L-glycero-D-manno-heptose-6-epimerase.